The following is a 65-amino-acid chain: Large ribosomal subunit protein bL35c (65 aa).

The tract at residues 18–50 (SSGKILRHKASKSHLLQKKSSKHRRHLSSTCQV) is disordered. Residues 22 to 44 (ILRHKASKSHLLQKKSSKHRRHL) are compositionally biased toward basic residues.

The protein belongs to the bacterial ribosomal protein bL35 family.

The protein resides in the plastid. It is found in the chloroplast. This is Large ribosomal subunit protein bL35c from Porphyra purpurea (Red seaweed).